Here is a 321-residue protein sequence, read N- to C-terminus: Phosphate acyltransferase (321 aa).

Belongs to the PlsX family. Homodimer. Probably interacts with PlsY.

The protein localises to the cytoplasm. It carries out the reaction a fatty acyl-[ACP] + phosphate = an acyl phosphate + holo-[ACP]. It participates in lipid metabolism; phospholipid metabolism. Its function is as follows. Catalyzes the reversible formation of acyl-phosphate (acyl-PO(4)) from acyl-[acyl-carrier-protein] (acyl-ACP). This enzyme utilizes acyl-ACP as fatty acyl donor, but not acyl-CoA. The polypeptide is Phosphate acyltransferase (Chlamydia trachomatis serovar A (strain ATCC VR-571B / DSM 19440 / HAR-13)).